The sequence spans 346 residues: Probable RNA methyltransferase PA14_40730 (346 aa).

The active-site Proton acceptor is the glutamate 91. Residues 94-320 enclose the Radical SAM core domain; sequence LLPRGGLCVS…TKVRNSAGQD (227 aa). Cysteine 101 and cysteine 325 form a disulfide bridge. 3 residues coordinate [4Fe-4S] cluster: cysteine 108, cysteine 112, and cysteine 115. Residues 153-154, serine 183, 206-208, and asparagine 282 contribute to the S-adenosyl-L-methionine site; these read GE and SLH. The S-methylcysteine intermediate role is filled by cysteine 325.

Belongs to the radical SAM superfamily. RlmN family. It depends on [4Fe-4S] cluster as a cofactor.

It is found in the cytoplasm. This Pseudomonas aeruginosa (strain UCBPP-PA14) protein is Probable RNA methyltransferase PA14_40730.